A 61-amino-acid chain; its full sequence is Small ribosomal subunit protein uS14B (61 aa).

Residues C24, C27, C40, and C43 each coordinate Zn(2+).

The protein belongs to the universal ribosomal protein uS14 family. Zinc-binding uS14 subfamily. In terms of assembly, part of the 30S ribosomal subunit. Contacts proteins S3 and S10. It depends on Zn(2+) as a cofactor.

In terms of biological role, binds 16S rRNA, required for the assembly of 30S particles and may also be responsible for determining the conformation of the 16S rRNA at the A site. This Kineococcus radiotolerans (strain ATCC BAA-149 / DSM 14245 / SRS30216) protein is Small ribosomal subunit protein uS14B.